Consider the following 664-residue polypeptide: DNA ligase (664 aa).

NAD(+) contacts are provided by residues Asp-31–Asp-35, Ser-80–Leu-81, and Glu-110. Lys-112 acts as the N6-AMP-lysine intermediate in catalysis. Arg-133 and Glu-169 together coordinate NAD(+). The region spanning Leu-237 to Ile-257 is the BRCT 1 domain. NAD(+) is bound by residues Lys-284 and Lys-308. Zn(2+) is bound by residues Cys-402, Cys-405, Cys-420, and Cys-426. Positions Asn-586 to Glu-664 constitute a BRCT 2 domain.

This sequence belongs to the NAD-dependent DNA ligase family. LigA subfamily. Mg(2+) serves as cofactor. The cofactor is Mn(2+).

It carries out the reaction NAD(+) + (deoxyribonucleotide)n-3'-hydroxyl + 5'-phospho-(deoxyribonucleotide)m = (deoxyribonucleotide)n+m + AMP + beta-nicotinamide D-nucleotide.. In terms of biological role, DNA ligase that catalyzes the formation of phosphodiester linkages between 5'-phosphoryl and 3'-hydroxyl groups in double-stranded DNA using NAD as a coenzyme and as the energy source for the reaction. It is essential for DNA replication and repair of damaged DNA. In Christiangramia forsetii (strain DSM 17595 / CGMCC 1.15422 / KT0803) (Gramella forsetii), this protein is DNA ligase.